A 91-amino-acid chain; its full sequence is Heat shock protein 30E (91 aa).

Residues 62-91 (RDQIRQPGAPESEGTSPNTGKDGKDPGNSL) form a disordered region. Basic and acidic residues predominate over residues 82–91 (KDGKDPGNSL).

Belongs to the small heat shock protein (HSP20) family.

In Xenopus laevis (African clawed frog), this protein is Heat shock protein 30E (hsp30e).